A 209-amino-acid chain; its full sequence is Egg case collagen (209 aa).

Residues Val-1–Val-129 form a nonhelical region region. The tract at residues Leu-130 to Val-209 is triple-helical region. Positions Pro-138–Val-209 are disordered. A compositionally biased stretch (gly residues) spans Gly-142–Gly-162.

Its function is as follows. Major component of the egg case wall which is secreted by the oviduct. The egg case combines mechanical strength and toughness with high permeability to small molecules and ions. The chain is Egg case collagen from Scyliorhinus canicula (Small-spotted catshark).